A 797-amino-acid polypeptide reads, in one-letter code: Glycoprotein gp2 (797 aa).

A signal peptide spans 1–25 (MGFIYARKLLLCMAVSIYAIGSTTT). 2 disordered regions span residues 24–188 (TTTE…TTAA) and 212–549 (AATT…EIVP). A compositionally biased stretch (low complexity) spans 212 to 373 (AATTTAATTT…PDSSTGSTST (162 aa)). Over residues 374 to 394 (AEPSSTFTLTPSTATPSTDQF) the composition is skewed to polar residues. 2 stretches are compositionally biased toward low complexity: residues 395-430 (TGSS…EAST) and 445-457 (TPDG…NTTP). Residues 466–492 (FADTQQTPDNGVSTQHTTINDHTTANA) are compositionally biased toward polar residues. Residues 495–505 (HAGHHRGRAGG) show a composition bias toward basic residues. N-linked (GlcNAc...) asparagine; by host glycosylation is present at N590. A helical membrane pass occupies residues 766 to 790 (FALVAATTLTVTILCLLCCLYCMLT).

The protein resides in the virion membrane. Functionally, virulence factor. The polypeptide is Glycoprotein gp2 (EUs4) (Equine herpesvirus 1 (strain Ab4p) (EHV-1)).